A 514-amino-acid chain; its full sequence is Na(+)/H(+) antiporter NhaB (514 aa).

The next 12 membrane-spanning stretches (helical) occupy residues 23-43 (LALL…PFIA), 63-83 (PLLP…TSAA), 97-117 (LLLM…LFIF), 120-140 (LLLS…AAAF), 144-164 (FLDA…FYGI), 202-222 (LMMH…VGEP), 238-258 (FFLR…LTCM), 303-323 (AVIG…VGLI), 357-377 (LTVF…APII), 391-411 (LFYL…VGTI), 447-467 (ATPN…APLI), and 475-495 (VWMA…CVEF).

This sequence belongs to the NhaB Na(+)/H(+) (TC 2.A.34) antiporter family.

The protein resides in the cell inner membrane. The enzyme catalyses 2 Na(+)(in) + 3 H(+)(out) = 2 Na(+)(out) + 3 H(+)(in). Its function is as follows. Na(+)/H(+) antiporter that extrudes sodium in exchange for external protons. The chain is Na(+)/H(+) antiporter NhaB from Salmonella gallinarum (strain 287/91 / NCTC 13346).